The primary structure comprises 143 residues: Actin-depolymerizing factor 2 (143 aa).

An ADF-H domain is found at 5 to 139; that stretch reads ASGMAVHDDC…GLDVFRSRAG (135 aa).

The protein belongs to the actin-binding proteins ADF family.

In terms of biological role, actin-depolymerizing protein. Severs actin filaments (F-actin) and binds to actin monomers. This Petunia hybrida (Petunia) protein is Actin-depolymerizing factor 2 (ADF2).